A 210-amino-acid polypeptide reads, in one-letter code: Putative protein-lysine deacylase ABHD14B (210 aa).

Alanine 2 is subject to N-acetylalanine. Serine 91 bears the Phosphoserine mark. Active-site charge relay system residues include serine 111, aspartate 162, and histidine 188.

The protein belongs to the AB hydrolase superfamily. ABHD14 family. May interact with TAF1.

It is found in the cytoplasm. The protein resides in the nucleus. It carries out the reaction L-lysyl-[protein] + acetyl-CoA = N(6)-acetyl-L-lysyl-[protein] + CoA + H(+). Its function is as follows. Acts as an atypical protein-lysine deacetylase in vitro. Catalyzes the deacetylation of lysine residues using CoA as substrate, generating acetyl-CoA and the free amine of protein-lysine residues. Additional experiments are however required to confirm the protein-lysine deacetylase activity in vivo. Has hydrolase activity towards various surrogate p-nitrophenyl (pNp) substrates, such as pNp-butyrate, pNp-acetate and pNp-octanoate in vitro, with a strong preference for pNp-acetate. May activate transcription. The sequence is that of Putative protein-lysine deacylase ABHD14B from Pongo abelii (Sumatran orangutan).